Consider the following 322-residue polypeptide: Quinolinate synthase (322 aa).

The iminosuccinate site is built by H37 and S54. A [4Fe-4S] cluster-binding site is contributed by C99. Iminosuccinate is bound by residues 125 to 127 (YIN) and S142. C185 contributes to the [4Fe-4S] cluster binding site. Residues 211–213 (HPE) and T228 each bind iminosuccinate. C278 serves as a coordination point for [4Fe-4S] cluster.

The protein belongs to the quinolinate synthase family. Type 2 subfamily. It depends on [4Fe-4S] cluster as a cofactor.

The protein localises to the cytoplasm. The catalysed reaction is iminosuccinate + dihydroxyacetone phosphate = quinolinate + phosphate + 2 H2O + H(+). The protein operates within cofactor biosynthesis; NAD(+) biosynthesis; quinolinate from iminoaspartate: step 1/1. In terms of biological role, catalyzes the condensation of iminoaspartate with dihydroxyacetone phosphate to form quinolinate. The sequence is that of Quinolinate synthase from Prosthecochloris aestuarii (strain DSM 271 / SK 413).